We begin with the raw amino-acid sequence, 186 residues long: Elongation factor P (186 aa).

This sequence belongs to the elongation factor P family.

It localises to the cytoplasm. The protein operates within protein biosynthesis; polypeptide chain elongation. Involved in peptide bond synthesis. Stimulates efficient translation and peptide-bond synthesis on native or reconstituted 70S ribosomes in vitro. Probably functions indirectly by altering the affinity of the ribosome for aminoacyl-tRNA, thus increasing their reactivity as acceptors for peptidyl transferase. In Mycoplasmopsis synoviae (strain 53) (Mycoplasma synoviae), this protein is Elongation factor P.